Here is a 949-residue protein sequence, read N- to C-terminus: Valine--tRNA ligase (949 aa).

Residues 45–55 carry the 'HIGH' region motif; sequence PNVTGVLHMGH. Residues 561 to 565 carry the 'KMSKS' region motif; that stretch reads KMSKS. Lysine 564 is a binding site for ATP. Residues 882–949 are a coiled coil; sequence EELLKQEKTR…EIKEKLMTLP (68 aa).

The protein belongs to the class-I aminoacyl-tRNA synthetase family. ValS type 1 subfamily. Monomer.

The protein localises to the cytoplasm. It catalyses the reaction tRNA(Val) + L-valine + ATP = L-valyl-tRNA(Val) + AMP + diphosphate. In terms of biological role, catalyzes the attachment of valine to tRNA(Val). As ValRS can inadvertently accommodate and process structurally similar amino acids such as threonine, to avoid such errors, it has a 'posttransfer' editing activity that hydrolyzes mischarged Thr-tRNA(Val) in a tRNA-dependent manner. This is Valine--tRNA ligase from Protochlamydia amoebophila (strain UWE25).